The following is a 340-amino-acid chain: 4-hydroxythreonine-4-phosphate dehydrogenase (340 aa).

Positions 141 and 142 each coordinate substrate. Positions 177, 222, and 277 each coordinate a divalent metal cation. The substrate site is built by lysine 285, asparagine 294, and arginine 303.

This sequence belongs to the PdxA family. As to quaternary structure, homodimer. Zn(2+) serves as cofactor. It depends on Mg(2+) as a cofactor. The cofactor is Co(2+).

Its subcellular location is the cytoplasm. The catalysed reaction is 4-(phosphooxy)-L-threonine + NAD(+) = 3-amino-2-oxopropyl phosphate + CO2 + NADH. Its pathway is cofactor biosynthesis; pyridoxine 5'-phosphate biosynthesis; pyridoxine 5'-phosphate from D-erythrose 4-phosphate: step 4/5. In terms of biological role, catalyzes the NAD(P)-dependent oxidation of 4-(phosphooxy)-L-threonine (HTP) into 2-amino-3-oxo-4-(phosphooxy)butyric acid which spontaneously decarboxylates to form 3-amino-2-oxopropyl phosphate (AHAP). In Maricaulis maris (strain MCS10) (Caulobacter maris), this protein is 4-hydroxythreonine-4-phosphate dehydrogenase.